The sequence spans 458 residues: tRNA modification GTPase MnmE (458 aa).

R26, E88, and R127 together coordinate (6S)-5-formyl-5,6,7,8-tetrahydrofolate. A TrmE-type G domain is found at 224 to 378; sequence GLSTAIIGRP…IEDRINQLFF (155 aa). N234 contributes to the K(+) binding site. Residues 234 to 239, 253 to 259, and 278 to 281 contribute to the GTP site; these read NVGKSS, TDIAGTT, and DTAG. Mg(2+) is bound at residue S238. K(+) contacts are provided by T253, I255, and T258. T259 contributes to the Mg(2+) binding site. Position 458 (K458) interacts with (6S)-5-formyl-5,6,7,8-tetrahydrofolate.

Belongs to the TRAFAC class TrmE-Era-EngA-EngB-Septin-like GTPase superfamily. TrmE GTPase family. As to quaternary structure, homodimer. Heterotetramer of two MnmE and two MnmG subunits. It depends on K(+) as a cofactor.

The protein localises to the cytoplasm. Functionally, exhibits a very high intrinsic GTPase hydrolysis rate. Involved in the addition of a carboxymethylaminomethyl (cmnm) group at the wobble position (U34) of certain tRNAs, forming tRNA-cmnm(5)s(2)U34. The chain is tRNA modification GTPase MnmE from Streptococcus pyogenes serotype M28 (strain MGAS6180).